The primary structure comprises 414 residues: Putative competence-damage inducible protein (414 aa).

Belongs to the CinA family.

The sequence is that of Putative competence-damage inducible protein from Geobacillus kaustophilus (strain HTA426).